Reading from the N-terminus, the 5058-residue chain is MGHAGCQFKALLWKNWLCRLRNPVLFLAEFFWPCILFVILTVLRFQEPPRYRDICYLQPRDLPSCGVIPFVQSLLCNTGSRCRNFSYEGSMEHHFRLSRFQTAADPKKVNNLAFLKEIQDLAEEIHGMMDKAKNLKRLWVERSNTPDSSYGSSFFTMDLNKTEEVILKLESLHQQPHIWDFLLLLPRLHTSHDHVEDGMDVAVNLLQTILNSLISLEDLDWLPLNQTFSQVSELVLNVTISTLTFLQQHGVAVTEPVYHLSMQNIVWDPQKVQYDLKSQFGFDDLHTEQILNSSAELKEIPTDTSLEKMVCSVLSSTSEDEAEKWGHVGGCHPKWSEAKNYLVHAVSWLRVYQQVFVQWQQGSLLQKTLTGMGHSLEALRNQFEEESKPWKVVEALHTALLLLNDSLSADGPKDNHTFPKILQHLWKLQSLLQNLPQWPALKRFLQLDGALRNAIAQNLHFVQEVLICLETSANDFKWFELNQLKLEKDVFFWELKQMLAKNAVCPNGRFSEKEVFLPPGNSSIWGGLQGLLCYCNSSETSVLNKLLGSVEDADRILQEVITWHKNMSVLIPEEYLDWQELEMQLSEASLSCTRLFLLLGADPSPENDVFSSDCKHQLVSTVIFHTLEKTQFFLEQAYYWKAFKKFIRKTCEVAQYVNMQESFQNRLLAFPEESPCFEENMDWKMISDNYFQFLNNLLKSPTASISRALNFTKHLLMMEKKLHTLEDEQMNFLLSFVEFFEKLLLPNLFDSSIVPSFHSLPSLTEDILNISSLWTNHLKSLKRDPSATDAQKLLEFGNEVIWKMQTLGSHWIRKEPKNLLRFIELILFEINPKLLELWAYGISKGKRAKLENFFTLLNFSVPENEILSTSFNFSQLFHSDWPKSPAMNIDFVRLSEAIITSLHEFGFLEQEQISEALNTVYAIRNASDLFSALSEPQKQEVDKILTHIHLNVFQDKDSALLLQIYSSFYRYIYELLNIQSRGSSLTFLTQISKHILDIIKQFNFQNISKAFAFLFKTAEVLGGISNVSYCQQLLSIFNFLELQAQSFMSTEGQELEVIHTTLTGLKQLLIIDEDFRISLFQYMSQFFNSSVEDLLDNKCLISDNKHISSVNYSTSEESSFVFPLAQIFSNLSANVSVFNKFMSIHCTVSWLQMWTEIWETISQLFKFDMNVFTSLHHGFTQLLDELEDDVKVSKSCQGILPTHNVARLILNLFKNVTQANDFHNWEDFLDLRDFLVALGNALVSVKKLNLEQVEKSLFTMEAALHQLKTFPFNESTSREFLNSLLEVFIEFSSTSEYIVRNLDSINDFLSNNLTNYGEKFENIITELREAIVFLRNVSHDRDLFSCADIFQNVTECILEDGFLYVNTSQRMLRILDTLNSTFSSENTISSLKGCIVWLDVINHLYLLSNSSFSQGHLQNILGNFRDIENKMNSILKIVTWVLNIKKPLCSSNGSHINCVNIYLKDVTDFLNIVLTTVFEKEKKPKFEILLALLNDSTKQVRMSINNLTTDFDFASQSNWRYFTELILRPIEMSDEIPNQFQNIWLHLITLGKEFQKLVKGIYFNILENNSSSKTENLLNIFATSPKEKDVNSVGNSIYHLASYLAFSLSHDLQNSPKIIISPEIMKATGLGIQLIRDVFNSLMPVVHHTSPQNAGYMQALKKVTSVMRTLKKADIDLLVDQLEQVSVNLMDFFKNISSVGTGNLVVNLLVGLMEKFADSSHSWNVNHLLQLSRLFPKDVVDAVIDVYYVLPHAVRLLQGVPGKNITEGLKDVYSFTLLHGITISNITKEDFAIVIKILLDTIELVSDKPDIISEALACFPVVWCWNHTNSGFRQNSKIDPCNVHGLMSSSFYGKVASILDHFHLSPQGEDSPCSNESSRMEITRKVVCIIHELVDWNSILLELSEVFHVNISLVKTVQKFWHKILPFVPPSINQTRDSISELCPSGSIKQVALQIIEKLKNVNFTKVTSGENILDKLSSLNKILNINEDTETSVQNIISSNLERTVQLISEDWSLEKSTHNLLSLFMMLQNANVTGSSLEALSSFIEKSETPYNFEELWPKFQQIMKDLTQDFRIRHLLSEMNKGIKSINSMALQKITLQFAHFLEILDSPSLKTLEIIEDFLLVTKNWLQEYANEDYSRMIETLFIPVTNESSTEDIALLAKAIATFWGSLKNISRAGNFDVAFLTHLLNQEQLTNFSVVQLLFENILINLINNLAGNSQEAAWNLNDTDLQIMNFINLILNHMQSETSRKTVLSLRSIVDFTEQFLKTFFSLFLKEDSENKISLLLKYFHKDVIAEMSFVPKDKILEILKLDQFLTLMIQDRLMNIFSSLKETIYHLMKSSFILDNGEFYFDTHQGLKFMQDLFNALLRETSMKNKTENNIDFFTVVSQLFFHVNKSEDLFKLNQDLGSALHLVRECSTEMARLLDTILHSPNKDFYALYPTLQEVILANLTDLLFFINNSFPLRNRATLEITKRLVGAISRASEESHVLKPLLEMSGTLVMLLNDSADLRDLATSMDSIVKLLKLVKKVSGKMSTVFKTHFISNTKDSVKFFDTLYSIMQQSVQNLVKEIATLKKIDHFTFEKINDLLVPFLDLAFEMIGVEPYISSNSDIFSMSPSILSYMNQSKDFSDILEEIAEFLTSVKMNLEDMRSLAVAFNNETQTFSMDSVNLREEILGCLVPINNITNQMDFLYPNPISTHSGPQDIKWEIIHEVIPFLDKILSQNSTEIGSFLKMVICLTLEALWKNLKKDNWNVSNVLMTFTQHPNNLLKTIETVLEASSGIKSDYEGDLNKSLYFDTPLSQNITHHQLEKAIHNVLSRIALWRKGLLFNNSEWITSTRTLFQPLFEIFIKATTGKNVTSEKEERTKKEMIDFPYSFKPFFCLEKYLGGLFVLTKYWQQIPLTDQSVVEICEVFQQTVKPSEAMEMLQKVKMMVVRVLTIVAENPSWTKDILCATLSCKQNGIRHLILSAIQGVTLAQDHFQEIEKIWSSPNQLNCESLSKNLSSTLESFKSSLENATGQDCTSQPRLETVQQHLYMLAKSLEETWSSGNPIMTFLSNFTVTEDVKIKDLMKNITKLTEELRSSIQISNETIHSILEANISHSKVLFSALTVALSGKCDQEILHLLLTFPKGEKSWIAAEELCSLPGSKVYSLIVLLSRNLDVRAFIYKTLMPSEANGLLNSLLDIVSSLSALLAKAQHVFEYLPEFLHTFKITALLETLDFQQVSQNVQARSSAFGSFQFVMKMVCKDQASFLSDSNMFINLPRVKELLEDDKEKFNIPEDSTPFCLKLYQEILQLPNGALVWTFLKPILHGKILYTPNTPEINKVIQKANYTFYIVDKLKTLSETLLEMSSLFQRSGSGQMFNQLQEALRNKFVRNFVENQLHIDVDKLTEKLQTYGGLLDEMFNHAGAGRFRFLGSILVNLSSCVALNRFQALQSVDILETKAHELLQQNSFLASIIFSNSLFDKNFRSESVKLPPHVSYTIRTNVLYSVRTDVVKNPSWKFHPQNLPADGFKYNYVFAPLQDMIERAIILVQTGQEALEPAAQTQAAPYPCHTSDLFLNNVGFFFPLIMMLTWMVSVASMVRKLVYEQEIQIEEYMRMMGVHPVIHFLAWFLENMAVLTISSATLAIVLKTSGIFAHSNTFIVFLFLLDFGMSVVMLSYLLSAFFSQANTAALCTSLVYMISFLPYIVLLVLHNQLSFVNQTFLCLLSTTAFGQGVFFITFLEGQETGIQWNNMYQALEQGGMTFGWVCWMILFDSSLYFLCGWYLSNLIPGTFGLRKPWYFPFTASYWKSVGFLVEKRQYFLSSSLFFFNENFDNKGSSLQNREGELEGSAPGVTLVSVTKEYEGHKAVVQDLSLTFYRDQITALLGTNGAGKTTIISMLTGLHPPTSGTIIINGKNLQTDLSRVRMELGVCPQQDILLDNLTVREHLLLFASIKAPQWTKKELHQQVNQTLQDVDLTQHQHKQTRALSGGLKRKLSLGIAFMGMSRTVVLDEPTSGVDPCSRHSLWDILLKYREGRTIIFTTHHLDEAEALSDRVAVLQHGRLRCCGPPFCLKEAYGQGLRLTLTRQPSVLEAHDLKDMACVTSLIKIYIPQAFLKDSSGSELTYTIPKDTDKACLKGLFQALDENLHQLHLTGYGISDTTLEEVFLMLLQDSNKKSHIALGTESELQNHRPTGHLSGYCGSLARPATVQGVQLLRAQVAAILARRLRRTLRAGKSTLADLLLPVLFVALAMGLFMVRPLATEYPPLRLTPGHYQRAETYFFSSGGDNLDLTRVLLRKFRDQDLPCADLNPRQKNSSCWRTDPFSHPEFQDSCGCLKCPNRSASAPYLTNHLGHTLLNLSGFNMEEYLLAPSEKPRLGGWSFGLKIPSEAGGANGNISKPPTLAKVWYNQKGFHSLPSYLNHLNNLILWQHLPPTVDWRQYGITLYSHPYGGALLNEDKILESIRQCGVALCIVLGFSILSASIGSSVVRDRVIGAKRLQHISGLGYRMYWFTNFLYDMLFYLVSVCLCVAVIVAFQLTAFTFRKNLAATALLLSLFGYATLPWMYLMSRIFSSSDVAFISYVSLNFIFGLCTMLITIMPRLLAIISKAKNLQNIYDVLKWVFTIFPQFCLGQGLVELCYNQIKYDLTHNFGIDSYVSPFEMNFLGWIFVQLASQGTVLLLLRVLLHWDLLRWPRGHSTLQGTVKSSKDTDVEKEEKRVFEGRTNGDILVLYNLSKHYRRFFQNIIAVQDISLGIPKGECFGLLGVNGAGKSTTFKMLNGEVSLTSGHAIIRTPMGDAVDLSSAGTAGVLIGYCPQQDALDELLTGWEHLYYYCSLRGIPRQCIPEVAGDLIRRLHLEAHADKPVATYSGGTKRKLSTALALVGKPDILLLDEPSSGMDPCSKRYLWQTIMKEVREGCAAVLTSHSMEECEALCTRLAIMVNGSFKCLGSPQHIKNRFGDGYTVKVWLCKEANQHCTVSDHLKLYFPGIQFKGQHLNLLEYHVPKRWGCLADLFKVIENNKTFLNIKHYSINQTTLEQVFINFASEQQQTLQSTLDPSTDSHHTHHLPI.

Helical transmembrane passes span 23 to 43 (PVLF…LTVL), 3568 to 3588 (VGFF…ASMV), 3607 to 3627 (GVHP…VLTI), 3648 to 3668 (FIVF…SYLL), 3679 to 3699 (ALCT…LLVL), 3709 to 3729 (TFLC…ITFL), and 3752 to 3772 (FGWV…CGWY). Residues 3842–4074 (VTLVSVTKEY…YGQGLRLTLT (233 aa)) enclose the ABC transporter 1 domain. Position 3875-3882 (3875-3882 (GTNGAGKT)) interacts with ATP. 7 helical membrane-spanning segments follow: residues 4226–4246 (TLAD…LFMV), 4458–4478 (VALC…SSVV), 4504–4524 (FLYD…VIVA), 4536–4556 (LAAT…WMYL), 4568–4588 (FISY…ITIM), 4607–4627 (VLKW…LVEL), and 4651–4671 (MNFL…LLLL). The ABC transporter 2 domain maps to 4718–4956 (LVLYNLSKHY…FGDGYTVKVW (239 aa)). 4754-4761 (GVNGAGKS) contributes to the ATP binding site.

It belongs to the ABC transporter superfamily. As to expression, significantly expressed in the bone marrow, trachea, testis, thyroid and lung as well as in skin fibroblasts.

The protein localises to the cytoplasmic vesicle membrane. The enzyme catalyses cholesterol(in) + ATP + H2O = cholesterol(out) + ADP + phosphate + H(+). In terms of biological role, may mediate the cholesterol and gangliosides transport from the plasma membrane to intracellular vesicles in an ATP hydrolysis dependent manner, thus playing a role in their internalization by endocytic retrograde transport and may also participate in the endocytosis of synaptic vesicle in cortical neurons. The polypeptide is ATP-binding cassette sub-family A member 13 (Homo sapiens (Human)).